The primary structure comprises 230 residues: Orotidine 5'-phosphate decarboxylase (230 aa).

Substrate-binding positions include aspartate 10, lysine 31, 58–67 (DLKLHDIPNT), threonine 117, arginine 179, glutamine 188, glycine 208, and arginine 209. Residue lysine 60 is the Proton donor of the active site.

It belongs to the OMP decarboxylase family. Type 1 subfamily. Homodimer.

The enzyme catalyses orotidine 5'-phosphate + H(+) = UMP + CO2. The protein operates within pyrimidine metabolism; UMP biosynthesis via de novo pathway; UMP from orotate: step 2/2. In terms of biological role, catalyzes the decarboxylation of orotidine 5'-monophosphate (OMP) to uridine 5'-monophosphate (UMP). In Staphylococcus haemolyticus (strain JCSC1435), this protein is Orotidine 5'-phosphate decarboxylase.